A 358-amino-acid polypeptide reads, in one-letter code: DNA polymerase IV (358 aa).

The UmuC domain maps to 6-187; sequence IIHIDMDYFF…LDIGDFPGVG (182 aa). Residues aspartate 10 and aspartate 105 each contribute to the Mg(2+) site. Glutamate 106 is an active-site residue.

The protein belongs to the DNA polymerase type-Y family. As to quaternary structure, monomer. Requires Mg(2+) as cofactor.

Its subcellular location is the cytoplasm. It carries out the reaction DNA(n) + a 2'-deoxyribonucleoside 5'-triphosphate = DNA(n+1) + diphosphate. In terms of biological role, poorly processive, error-prone DNA polymerase involved in untargeted mutagenesis. Copies undamaged DNA at stalled replication forks, which arise in vivo from mismatched or misaligned primer ends. These misaligned primers can be extended by PolIV. Exhibits no 3'-5' exonuclease (proofreading) activity. May be involved in translesional synthesis, in conjunction with the beta clamp from PolIII. The polypeptide is DNA polymerase IV (Staphylococcus haemolyticus (strain JCSC1435)).